A 472-amino-acid chain; its full sequence is 3-isopropylmalate dehydratase large subunit (472 aa).

Residues cysteine 352, cysteine 413, and cysteine 416 each coordinate [4Fe-4S] cluster.

The protein belongs to the aconitase/IPM isomerase family. LeuC type 1 subfamily. In terms of assembly, heterodimer of LeuC and LeuD. The cofactor is [4Fe-4S] cluster.

The enzyme catalyses (2R,3S)-3-isopropylmalate = (2S)-2-isopropylmalate. It functions in the pathway amino-acid biosynthesis; L-leucine biosynthesis; L-leucine from 3-methyl-2-oxobutanoate: step 2/4. In terms of biological role, catalyzes the isomerization between 2-isopropylmalate and 3-isopropylmalate, via the formation of 2-isopropylmaleate. The chain is 3-isopropylmalate dehydratase large subunit from Laribacter hongkongensis (strain HLHK9).